The following is a 146-amino-acid chain: MSLHVTLRFTVALAAGLLFGFGLALSEMINPIRVLSFLNVASGHWNPSLLFVLGSALAVAFPGMALQRRLKRPLLDECFHLPSKKVIDRRIVFGSAIFGTGWGLTGLCPGPAIASLSTGLGPVLLFVAAMAAGMIIHDRIVVRCLS.

Transmembrane regions (helical) follow at residues 9–29 (FTVA…SEMI), 46–66 (NPSL…GMAL), 91–111 (IVFG…CPGP), and 116–136 (LSTG…GMII).

This sequence belongs to the TsuA/YedE (TC 9.B.102) family.

Its subcellular location is the cell inner membrane. This is Probable transporter XF_0765 from Xylella fastidiosa (strain 9a5c).